Here is a 413-residue protein sequence, read N- to C-terminus: Ribulose bisphosphate carboxylase/oxygenase activase, chloroplastic (413 aa).

The transit peptide at 1–54 (MAATVSTIGAVNRTTLNNSNYGGLVPNSAFLGSRLKVSSRFTTSKMVTGNFKIV) directs the protein to the chloroplast. Position 162–169 (162–169 (GGKGQGKS)) interacts with ATP.

It belongs to the RuBisCO activase family.

The protein localises to the plastid. It localises to the chloroplast stroma. In terms of biological role, activation of RuBisCO (ribulose-1,5-bisphosphate carboxylase/oxygenase; EC 4.1.1.39) involves the ATP-dependent carboxylation of the epsilon-amino group of lysine leading to a carbamate structure. This is Ribulose bisphosphate carboxylase/oxygenase activase, chloroplastic from Cucumis sativus (Cucumber).